A 188-amino-acid polypeptide reads, in one-letter code: Trafficking protein particle complex subunit 5 (188 aa).

It belongs to the TRAPP small subunits family. BET3 subfamily. Part of the multisubunit TRAPP (transport protein particle) complex.

It localises to the golgi apparatus. The protein localises to the cis-Golgi network. Its subcellular location is the endoplasmic reticulum. In terms of biological role, may play a role in vesicular transport from endoplasmic reticulum to Golgi. The protein is Trafficking protein particle complex subunit 5 (TRAPPC5) of Gallus gallus (Chicken).